Here is a 178-residue protein sequence, read N- to C-terminus: Ribonuclease M5 (178 aa).

Positions aspartate 10–asparagine 94 constitute a Toprim domain. Residues glutamate 16, aspartate 62, and aspartate 64 each coordinate Mg(2+).

Belongs to the ribonuclease M5 family. Mg(2+) is required as a cofactor.

Its subcellular location is the cytoplasm. The enzyme catalyses Endonucleolytic cleavage of RNA, removing 21 and 42 nucleotides, respectively, from the 5'- and 3'-termini of a 5S-rRNA precursor.. Functionally, required for correct processing of both the 5' and 3' ends of 5S rRNA precursor. Cleaves both sides of a double-stranded region yielding mature 5S rRNA in one step. This chain is Ribonuclease M5 (rnmV), found in Mycoplasma genitalium (strain ATCC 33530 / DSM 19775 / NCTC 10195 / G37) (Mycoplasmoides genitalium).